Consider the following 209-residue polypeptide: uncharacterized protein (209 aa).

Helical transmembrane passes span Ala10–Phe32, Leu37–Ile59, and Phe64–Val86.

It localises to the cell membrane. This is an uncharacterized protein from Aquifex aeolicus (strain VF5).